Reading from the N-terminus, the 219-residue chain is Transmembrane emp24 domain-containing protein 10 (219 aa).

The N-terminal stretch at 1–31 (MSGLFGPLSRPGPLPSAWLFLLLLGPSSVLG) is a signal peptide. The interval 1–142 (MSGLFGPLSR…KNYEEIAKVE (142 aa)) is required for interaction with STX17. Residues 32 to 185 (ISFHLPVNSR…RDTNESTNTR (154 aa)) are Lumenal-facing. Positions 41–193 (RKCLREEIHK…TRVLYFSIFS (153 aa)) constitute a GOLD domain. The segment at 147–178 (LEVELRRLEDLSESIVNDFAYMKKREEEMRDT) is required for TMED10 and TMED2 cis-Golgi network localization. Dimethylated arginine is present on residues Arg-171 and Arg-176. N-linked (GlcNAc...) asparagine glycosylation is present at Asn-179. Residues 186 to 206 (VLYFSIFSMFCLIGLATWQVF) traverse the membrane as a helical segment. Residues 204-219 (QVFYLRRFFKAKKLIE) are interaction with COPG1. Residues 207 to 219 (YLRRFFKAKKLIE) are Cytoplasmic-facing. Positions 207-219 (YLRRFFKAKKLIE) are interaction with ARF1 and IL1B. A COPII vesicle coat-binding motif is present at residues 211 to 212 (FF). The COPI vesicle coat-binding signature appears at 211–219 (FFKAKKLIE).

This sequence belongs to the EMP24/GP25L family. Predominantly dimeric and to a lesser extent monomeric in the ER. Monomer and dimer in ERGIC and cis-Golgi network. Forms homooligomer (via GOLD domain); the assembly is promoted by direct binding with leaderless cargos and may form a protein channel that facilitates cargo entry into the ERGIC. Forms heterooligomeric complexes with other members of the p24 family such as TMED2, TMED7 and TMED9. Interacts (via GOLD domain) with TMED2 (via GOLD domain); the complex is required for export of TMED10 from the ER to the cis-Golgi network; the complex is proposed to be involved in cis-Golgi network dynamics and / or biogenesis. Associates with the COPI vesicle coat subunits (coatomer). Tetramerization of the cytoplasmic domain at the Golgi membrane in vitro; the complex is proposed to interact with COPI coatomer and induce budding of the vesicles. Interacts with COPG1; the interaction involves TMED10 homodimer. Interacts with ARF1 (GDP-bound); the interaction probably involves a TMED10 oligomer. Interacts with SEC23A, SEC24B, SEC24C and SEC24D components of the coat protein complex II/COPII, indicative of an association of TMED10 with the COPII vesicle coat. Interacts with CD59. Interacts with MPPE1/PGAP5; the complex might recruit and sort GPI-anchored proteins to the ER-exit site, or the interaction might lead to recycling of PGAP5 between the ER and the Golgi. Interacts with F2LR1/PAR2. Interacts with KDELR2/ERD2; the interaction is disrupted by KDELR2 ligand. Found in a complex composed at least of SURF4, TMED2 and TMED10. Associates with the presenilin-dependent gamma-secretase complex. Interacts with STX17; the interaction is direct. Interacts with IL-1; the interaction is direct. Interacts with RAB21 (active GTP-bound form); the interaction is indirect and regulates TMED10 abundance and localization at the Golgi.

The protein resides in the endoplasmic reticulum membrane. It localises to the endoplasmic reticulum-Golgi intermediate compartment membrane. Its subcellular location is the golgi apparatus membrane. It is found in the golgi apparatus. The protein localises to the cis-Golgi network membrane. The protein resides in the trans-Golgi network membrane. It localises to the cytoplasmic vesicle. Its subcellular location is the secretory vesicle membrane. It is found in the cell membrane. The protein localises to the melanosome. Cargo receptor involved in protein vesicular trafficking and quality control in the endoplasmic reticulum (ER) and Golgi. The p24 protein family is a group of transmembrane proteins that bind coat protein complex I/COPI and coat protein complex II/COPII involved in vesicular trafficking between the membranes. Acts at the lumenal side for incorporation of secretory cargo molecules into transport vesicles and involved in vesicle coat formation at the cytoplasmic side. Mainly functions in the early secretory pathway and cycles between the ER, ER-Golgi intermediate compartment (ERGIC) and Golgi, mediating cargo transport through COPI and COPII-coated vesicles. In COPII vesicle-mediated anterograde transport, involved in the transport of GPI-anchored proteins by acting together with TMED2 as their cargo receptor; the function specifically implies SEC24C and SEC24D of the COPII vesicle coat and lipid raft-like microdomains of the ER. Recognizes GPI anchors structural remodeled in the ER by the GPI inositol-deacylase/PGAP1 and the metallophosphoesterase MPPE1/PGAP5. In COPI vesicle-mediated retrograde transport, involved in the biogenesis of COPI vesicles and vesicle coat recruitment. Involved in trafficking of amyloid beta A4 protein and soluble APP-beta release (independent from the modulation of gamma-secretase activity). Involved in the KDELR2-mediated retrograde transport of the toxin A subunit (CTX-A-K63)together with COPI and the COOH terminus of KDELR2. On Golgi membranes, acts as a primary receptor for ARF1-GDP, a GTP-binding protein involved in COPI-vesicle formation. Increases coatomer-dependent GTPase-activating activity of ARFGAP2 which mediates the hydrolysis of ARF1-bound GTP and therefore modulates protein trafficking from the Golgi apparatus. Involved in the exocytic trafficking of G protein-coupled receptors F2LR1/PAR2 (trypsin and tryspin-like enzyme receptor), OPRM1 (opioid receptor) and P2RY4 (UTD and UDP receptor) from the Golgi to the plasma membrane, thus contributing to receptor resensitization. In addition to its cargo receptor activity, may also act as a protein channel after oligomerization, facilitating the post-translational entry of leaderless cytoplasmic cargo into the ERGIC. Involved in the translocation into ERGIC, the vesicle entry and the secretion of leaderless cargos (lacking the secretion signal sequence), including the mature form of interleukin 1/IL-1 family members, the alpha-crystallin B chain HSPB5, the carbohydrate-binding proteins galectin-1/LGALS1 and galectin-3/LGALS3, the microtubule-associated protein Tau/MAPT, and the annexin A1/ANXA1; the translocation process is dependent on cargo protein unfolding and enhanced by chaperones HSP90AB1 and HSP90B1/GRP9. Could also associates with the presenilin-dependent gamma-secretase complex in order to regulate gamma-cleavages of the amyloid beta A4 protein to yield amyloid-beta 40/Abeta40. The chain is Transmembrane emp24 domain-containing protein 10 from Mus musculus (Mouse).